A 1342-amino-acid polypeptide reads, in one-letter code: DNA-directed RNA polymerase subunit beta (1342 aa).

Belongs to the RNA polymerase beta chain family. In terms of assembly, the RNAP catalytic core consists of 2 alpha, 1 beta, 1 beta' and 1 omega subunit. When a sigma factor is associated with the core the holoenzyme is formed, which can initiate transcription.

The catalysed reaction is RNA(n) + a ribonucleoside 5'-triphosphate = RNA(n+1) + diphosphate. In terms of biological role, DNA-dependent RNA polymerase catalyzes the transcription of DNA into RNA using the four ribonucleoside triphosphates as substrates. In Salmonella choleraesuis (strain SC-B67), this protein is DNA-directed RNA polymerase subunit beta.